The primary structure comprises 385 residues: V-type proton ATPase subunit C (385 aa).

The protein belongs to the V-ATPase C subunit family. V-ATPase is a heteromultimeric enzyme made up of two complexes: the ATP-hydrolytic V1 complex and the proton translocation V0 complex. The V1 complex consists of three catalytic AB heterodimers that form a heterohexamer, three peripheral stalks each consisting of EG heterodimers, one central rotor including subunits D and F, and the regulatory subunits C and H. The proton translocation complex V0 consists of the proton transport subunit a, a ring of proteolipid subunits c9c'', rotary subunit d, subunits e and f, and the accessory subunits VhaAC45 and ATP6AP2.

Functionally, subunit of the V1 complex of vacuolar(H+)-ATPase (V-ATPase), a multisubunit enzyme composed of a peripheral complex (V1) that hydrolyzes ATP and a membrane integral complex (V0) that translocates protons. V-ATPase is responsible for acidifying and maintaining the pH of intracellular compartments and in some cell types, is targeted to the plasma membrane, where it is responsible for acidifying the extracellular environment. Subunit C is necessary for the assembly of the catalytic sector of the enzyme and is likely to have a specific function in its catalytic activity. The polypeptide is V-type proton ATPase subunit C (Manduca sexta (Tobacco hawkmoth)).